Reading from the N-terminus, the 1479-residue chain is Peroxidasin homolog (1479 aa).

The N-terminal stretch at 1-26 (MAKRSRGPGRRCLLALVLFCAWGTLA) is a signal peptide. Residues 27-63 (VVAQKPGAGCPSRCLCFRTTVRCMHLLLEAVPAVAPQ) form the LRRNT domain. Intrachain disulfides connect cysteine 36–cysteine 42 and cysteine 40–cysteine 49. LRR repeat units follow at residues 61-84 (APQT…AFRR), 85-108 (LRNL…AFED), 110-132 (ENLK…AFKG), 133-156 (LASL…SFQH), 157-180 (LPKL…TFNH), and 182-204 (ESMK…LWLA). In terms of domain architecture, LRRCT spans 192–244 (NTLHCDCEILWLADLLKTYAESGNAQAAAICEYPRRIQGRSVATITPEELNCE). Cystine bridges form between cysteine 196–cysteine 243, cysteine 198–cysteine 222, cysteine 267–cysteine 317, cysteine 363–cysteine 412, cysteine 454–cysteine 502, and cysteine 546–cysteine 594. Ig-like C2-type domains are found at residues 246–332 (PRIT…QEVT), 342–428 (PTFV…AFII), 433–520 (PQFT…LTVQ), and 521–610 (PRVT…MVLS). N-linked (GlcNAc...) asparagine glycosylation is found at asparagine 640, asparagine 699, asparagine 719, and asparagine 731. 4 cysteine pairs are disulfide-bonded: cysteine 723–cysteine 885, cysteine 732–cysteine 748, cysteine 847–cysteine 857, and cysteine 851–cysteine 875. Aspartate 826 contacts heme b. The Proton acceptor role is filled by histidine 827. Aspartate 828 lines the Ca(2+) pocket. Asparagine 865 carries an N-linked (GlcNAc...) asparagine glycan. Residues threonine 907, tyrosine 909, aspartate 911, and serine 913 each contribute to the Ca(2+) site. Cysteine 959 and cysteine 970 are joined by a disulfide. The N-linked (GlcNAc...) asparagine glycan is linked to asparagine 964. Heme b contacts are provided by glutamate 980 and histidine 1074. Residues 1151–1175 (ALDLAAINIQRGRDHGIPPYHDYRV) form an LRR 7 repeat. The residue at position 1176 (tyrosine 1176) is a Phosphotyrosine. 2 disulfides stabilise this stretch: cysteine 1177/cysteine 1234 and cysteine 1275/cysteine 1301. A glycan (N-linked (GlcNAc...) asparagine) is linked at asparagine 1178. Position 1180 is a phosphoserine (serine 1180). One copy of the LRR 8 repeat lies at 1270-1291 (LARILCDNADNITRVQSDVFRV). Residues asparagine 1280, asparagine 1368, and asparagine 1425 are each glycosylated (N-linked (GlcNAc...) asparagine). A required in homotrimerization region spans residues 1315–1411 (CCEDCRTRGQ…QIKKLESRLS (97 aa)). The tract at residues 1342–1380 (YQEDKPTKKTRPRKIPSVGRQGEHLSNSTSAFSTRSDAS) is disordered. The segment covering 1365–1380 (HLSNSTSAFSTRSDAS) has biased composition (polar residues). The VWFC domain maps to 1413–1471 (TECVDAGGESHANNTKWKKDACTICECKDGQVTCFVEACPPATCAVPVNIPGACCPVCL).

Belongs to the peroxidase family. XPO subfamily. As to quaternary structure, homotrimer; disulfide-linked. The homotrimer form is predominant. Homooligomer; disulfide-linked. Oligomerization occurs intracellularly before C-terminal proteolytic cleavage. Interacts with PXDNL; this interaction inhibits the peroxidase activity of PXDN. Ca(2+) is required as a cofactor. It depends on heme b as a cofactor. Post-translationally, glycosylated. Four sites are completely N-glycosylated (Asn-640, Asn-731, Asn-865 and Asn-1425), whereas the others are found partially glycosylated. In terms of processing, processed by FURIN and the proteolytic processing largely depends on the peroxidase activity of PXDN. The proteolytic cleavage occurs after intracellular homotrimerization and releases into the extracellular matrix a large, catalytically active fragment and a smaller fragment consisting primarily of the C-terminal VWFC domain. The processing enhances both peroxidase activity and sulfilimine cross-links formation. As to expression, expressed at higher levels in heart, lung, ovary, spleen, intestine and placenta, and at lower levels in liver, colon, pancreas, kidney, thymus, skeletal muscle and prostate. Expressed in tumors such as melanoma, breast cancer, ovarian cancer and glioblastoma. A shorter form probably lacking the signal sequence is found in testis and in EB1 cells undergoing p53/TP53-dependent apoptosis.

The protein resides in the secreted. It is found in the extracellular space. It localises to the extracellular matrix. The protein localises to the endoplasmic reticulum. Its subcellular location is the cell surface. The protein resides in the basement membrane. The enzyme catalyses L-lysyl-[collagen] + L-methionyl-[collagen] + H2O2 = [collagen]-L-lysyl-N-S-L-methionyl-[collagen] + 2 H2O + H(+). It catalyses the reaction bromide + H2O2 = hypobromite + H2O. The catalysed reaction is L-lysyl-[collagen] + L-methionyl-[collagen] + hypobromite = [collagen]-L-lysyl-N-S-L-methionyl-[collagen] + bromide + H2O + H(+). It carries out the reaction L-tyrosyl-[protein] + bromide + H2O2 + H(+) = 3-bromo-L-tyrosyl-[protein] + 2 H2O. The enzyme catalyses hypobromite + L-tyrosyl-[protein] + H(+) = 3-bromo-L-tyrosyl-[protein] + H2O. Its activity is regulated as follows. The hypobromous acid formation is activated by increasing nitrite concentrations and inhibited by increasing urate concentrations. Catalyzes the two-electron oxidation of bromide by hydrogen peroxide and generates hypobromite as a reactive intermediate which mediates the formation of sulfilimine cross-links between methionine and hydroxylysine residues within an uncross-linked collagen IV/COL4A1 NC1 hexamer. In turns, directly contributes to the collagen IV network-dependent fibronectin/FN and laminin assembly, which is required for full extracellular matrix (ECM)-mediated signaling. Thus, sulfilimine cross-links are essential for growth factor-induced cell proliferation and survival in endothelial cells, an event essential to basement membrane integrity. In addition, through the bromide oxidation, may promote tubulogenesis and induce angiogenesis through ERK1/2, Akt, and FAK pathways. Moreover brominates alpha2 collagen IV chain/COL4A2 at 'Tyr-1485' and leads to bromine enrichment of the basement membranes. In vitro, can also catalyze the two-electron oxidation of thiocyanate and iodide and these two substrates could effectively compete with bromide and thus inhibit the formation of sulfilimine bonds. Binds laminins. May play a role in the organization of eyeball structure and lens development during eye development. The sequence is that of Peroxidasin homolog from Homo sapiens (Human).